A 461-amino-acid chain; its full sequence is Coronin-1A (461 aa).

Residue Ser-2 is modified to N-acetylserine. Ser-2 is modified (phosphoserine; by PKC). WD repeat units follow at residues 13–63, 73–110, 123–160, 164–204, 207–251, 258–296, and 302–349; these read HVFG…LVLP, NAPT…MVWE, PVVT…MVWD, GAAM…RIIE, KGTV…ALWD, PLSL…RYFE, and PFLH…EPIA. Over residues 403-418 the composition is skewed to basic and acidic residues; the sequence is ELRVNRGLDTGRRRAA. Positions 403–432 are disordered; the sequence is ELRVNRGLDTGRRRAAPEASGTPSSDAVSR. At Thr-412 the chain carries Phosphothreonine; by PKC. Phosphoserine is present on Ser-422. Positions 424 to 460 form a coiled coil; that stretch reads TPSSDAVSRLEEEMRKLQATVQELQKRLDRLEETVQA. Lys-449 carries the N6-acetyllysine modification.

Belongs to the WD repeat coronin family. In terms of assembly, binds actin. Post-translationally, phosphorylation at Thr-412 by PKC strongly down-regulates the association with actin. Polyubiquitinated by RNF128 with 'Lys-48'-linked chains, leading to proteasomal degradation. In terms of tissue distribution, expressed in brain, thymus, spleen, bone marrow and lymph node. Low in lung and gut.

It localises to the cytoplasm. The protein resides in the cytoskeleton. The protein localises to the cell cortex. Its subcellular location is the cytoplasmic vesicle. It is found in the phagosome membrane. May be a crucial component of the cytoskeleton of highly motile cells, functioning both in the invagination of large pieces of plasma membrane, as well as in forming protrusions of the plasma membrane involved in cell locomotion. In mycobacteria-infected cells, its retention on the phagosomal membrane prevents fusion between phagosomes and lysosomes. This is Coronin-1A (CORO1A) from Homo sapiens (Human).